Here is a 76-residue protein sequence, read N- to C-terminus: Repressor protein of division inhibition gene dicB (76 aa).

A DNA-binding region spans residues Lys13–Asp33.

This protein is a repressor of division inhibition gene dicB. The sequence is that of Repressor protein of division inhibition gene dicB (dicC) from Escherichia coli (strain K12).